The following is a 398-amino-acid chain: MVQKIKAFLSQESSGGILLMLAVAMAMLLANSPLAGLYQGFLDTPVQVRFGQLDINKPLLLWVNDGLMALFFLLIGLEVKRELVEGALSSVSKASLPTFAAIGGMVFPALVYLGFNFGNEATQNGWAIPAATDIAFALGVLALLGNRVPVALKVFLLALAIIDDIGVIVIIALFYSSDLSITSLVIAAIAIGSMVILNLKGVRTLTPYALLGLLLWIAVLKSGVHATLAGVVIAFCIPLKVKPGEESPSRYLEHSLHPWSTFMILPLFAFANAGLSLSGMSLASLAEPAALGVMLGLLLGKPLGVLLFSYAAVKLKWASLPQGVNWQQISAVAVLCGVGFTMSIFISSLAFEHSAVDVGNYARLGTLVGSMLSASIAYFWLTKVLNDDKGETDENKNS.

The next 11 helical transmembrane spans lie at Ile-17–Leu-37, Leu-59–Val-79, Ser-95–Phe-115, Gly-125–Gly-145, Val-154–Phe-174, Leu-179–Leu-199, Leu-213–Ile-233, Phe-262–Leu-282, Pro-288–Phe-308, Ala-331–Phe-351, and Leu-364–Val-384.

It belongs to the NhaA Na(+)/H(+) (TC 2.A.33) antiporter family.

It is found in the cell inner membrane. It carries out the reaction Na(+)(in) + 2 H(+)(out) = Na(+)(out) + 2 H(+)(in). Its function is as follows. Na(+)/H(+) antiporter that extrudes sodium in exchange for external protons. The polypeptide is Na(+)/H(+) antiporter NhaA 2 (Shewanella denitrificans (strain OS217 / ATCC BAA-1090 / DSM 15013)).